A 205-amino-acid polypeptide reads, in one-letter code: Small ribosomal subunit protein uS3c (205 aa).

Residues 37–106 (IRQLLRDYVL…TWRISLVEVS (70 aa)) enclose the KH type-2 domain.

This sequence belongs to the universal ribosomal protein uS3 family. As to quaternary structure, part of the 30S ribosomal subunit.

It is found in the plastid. The protein localises to the chloroplast. This is Small ribosomal subunit protein uS3c (rps3) from Cyanidioschyzon merolae (strain NIES-3377 / 10D) (Unicellular red alga).